We begin with the raw amino-acid sequence, 253 residues long: Imidazole glycerol phosphate synthase subunit HisF (253 aa).

Catalysis depends on residues D13 and D132.

Belongs to the HisA/HisF family. As to quaternary structure, heterodimer of HisH and HisF.

Its subcellular location is the cytoplasm. It catalyses the reaction 5-[(5-phospho-1-deoxy-D-ribulos-1-ylimino)methylamino]-1-(5-phospho-beta-D-ribosyl)imidazole-4-carboxamide + L-glutamine = D-erythro-1-(imidazol-4-yl)glycerol 3-phosphate + 5-amino-1-(5-phospho-beta-D-ribosyl)imidazole-4-carboxamide + L-glutamate + H(+). It participates in amino-acid biosynthesis; L-histidine biosynthesis; L-histidine from 5-phospho-alpha-D-ribose 1-diphosphate: step 5/9. Functionally, IGPS catalyzes the conversion of PRFAR and glutamine to IGP, AICAR and glutamate. The HisF subunit catalyzes the cyclization activity that produces IGP and AICAR from PRFAR using the ammonia provided by the HisH subunit. The sequence is that of Imidazole glycerol phosphate synthase subunit HisF from Aliarcobacter butzleri (strain RM4018) (Arcobacter butzleri).